The following is a 135-amino-acid chain: Small ribosomal subunit protein uS11 (135 aa).

It belongs to the universal ribosomal protein uS11 family. Part of the 30S ribosomal subunit. Interacts with proteins S7 and S18. Binds to IF-3.

Its function is as follows. Located on the platform of the 30S subunit, it bridges several disparate RNA helices of the 16S rRNA. Forms part of the Shine-Dalgarno cleft in the 70S ribosome. The protein is Small ribosomal subunit protein uS11 of Protochlamydia amoebophila (strain UWE25).